The primary structure comprises 962 residues: Integrator complex subunit 7 (962 aa).

Phosphoserine occurs at positions 338 and 809.

It belongs to the Integrator subunit 7 family. Component of the Integrator complex, composed of core subunits INTS1, INTS2, INTS3, INTS4, INTS5, INTS6, INTS7, INTS8, INTS9/RC74, INTS10, INTS11/CPSF3L, INTS12, INTS13, INTS14 and INTS15. The core complex associates with protein phosphatase 2A subunits PPP2CA and PPP2R1A, to form the Integrator-PP2A (INTAC) complex. Interacts with NABP2.

The protein resides in the nucleus. Its subcellular location is the chromosome. It localises to the cytoplasm. In terms of biological role, component of the integrator complex, a multiprotein complex that terminates RNA polymerase II (Pol II) transcription in the promoter-proximal region of genes. The integrator complex provides a quality checkpoint during transcription elongation by driving premature transcription termination of transcripts that are unfavorably configured for transcriptional elongation: the complex terminates transcription by (1) catalyzing dephosphorylation of the C-terminal domain (CTD) of Pol II subunit POLR2A/RPB1 and SUPT5H/SPT5, (2) degrading the exiting nascent RNA transcript via endonuclease activity and (3) promoting the release of Pol II from bound DNA. The integrator complex is also involved in terminating the synthesis of non-coding Pol II transcripts, such as enhancer RNAs (eRNAs), small nuclear RNAs (snRNAs), telomerase RNAs and long non-coding RNAs (lncRNAs). May be not involved in the recruitment of cytoplasmic dynein to the nuclear envelope by different components of the INT complex. Plays a role in DNA damage response (DDR) signaling during the S phase. The sequence is that of Integrator complex subunit 7 from Homo sapiens (Human).